A 360-amino-acid chain; its full sequence is Phosphoserine aminotransferase (360 aa).

R42 contacts L-glutamate. Residues 76–77 (AR), W102, T153, D172, and Q195 each bind pyridoxal 5'-phosphate. N6-(pyridoxal phosphate)lysine is present on K196. 237 to 238 (NT) contributes to the pyridoxal 5'-phosphate binding site.

This sequence belongs to the class-V pyridoxal-phosphate-dependent aminotransferase family. SerC subfamily. Homodimer. Requires pyridoxal 5'-phosphate as cofactor.

It localises to the cytoplasm. It carries out the reaction O-phospho-L-serine + 2-oxoglutarate = 3-phosphooxypyruvate + L-glutamate. The catalysed reaction is 4-(phosphooxy)-L-threonine + 2-oxoglutarate = (R)-3-hydroxy-2-oxo-4-phosphooxybutanoate + L-glutamate. The protein operates within amino-acid biosynthesis; L-serine biosynthesis; L-serine from 3-phospho-D-glycerate: step 2/3. Its pathway is cofactor biosynthesis; pyridoxine 5'-phosphate biosynthesis; pyridoxine 5'-phosphate from D-erythrose 4-phosphate: step 3/5. Its function is as follows. Catalyzes the reversible conversion of 3-phosphohydroxypyruvate to phosphoserine and of 3-hydroxy-2-oxo-4-phosphonooxybutanoate to phosphohydroxythreonine. The sequence is that of Phosphoserine aminotransferase from Photobacterium profundum (strain SS9).